Consider the following 538-residue polypeptide: Putative cysteine ligase BshC (538 aa).

A coiled-coil region spans residues 460 to 484 (KINEQIELLERMLKRNVEKKHEVEL).

The protein belongs to the BshC family.

In terms of biological role, involved in bacillithiol (BSH) biosynthesis. May catalyze the last step of the pathway, the addition of cysteine to glucosamine malate (GlcN-Mal) to generate BSH. The protein is Putative cysteine ligase BshC of Bacillus cereus (strain ATCC 10987 / NRS 248).